A 537-amino-acid polypeptide reads, in one-letter code: Quadr-hydrophobin (537 aa).

Residues 1–17 (MKFITVAAALFASTSLA) form the signal peptide. Hydrophobin stretches follow at residues 63–199 (GGNP…QNPI), 200–299 (GGNP…ENPT), 300–421 (GGNP…QDPL), and 422–537 (GGNP…RAII). 2 N-linked (GlcNAc...) asparagine glycosylation sites follow: Asn-70 and Asn-113. 16 disulfide bridges follow: Cys-134/Cys-183, Cys-144/Cys-174, Cys-145/Cys-157, Cys-184/Cys-195, Cys-234/Cys-283, Cys-244/Cys-274, Cys-245/Cys-257, Cys-284/Cys-295, Cys-356/Cys-405, Cys-366/Cys-396, Cys-367/Cys-379, Cys-406/Cys-417, Cys-471/Cys-520, Cys-481/Cys-511, Cys-482/Cys-494, and Cys-521/Cys-532.

It belongs to the cerato-ulmin hydrophobin family. As to quaternary structure, homotetramer. Further self-assembles to form highly ordered films at water-air interfaces through intermolecular interactions.

The protein localises to the secreted. Its subcellular location is the cell wall. Aerial growth, conidiation, and dispersal of filamentous fungi in the environment rely upon a capability of their secreting small amphipathic proteins called hydrophobins (HPBs) with low sequence identity. Class I can self-assemble into an outermost layer of rodlet bundles on aerial cell surfaces, conferring cellular hydrophobicity that supports fungal growth, development and dispersal; whereas Class II form highly ordered films at water-air interfaces through intermolecular interactions but contribute nothing to the rodlet structure. This Cordyceps militaris (Caterpillar fungus) protein is Quadr-hydrophobin.